We begin with the raw amino-acid sequence, 414 residues long: Probable acetyl-CoA acetyltransferase (414 aa).

Cysteine 110 (acyl-thioester intermediate) is an active-site residue. CoA is bound by residues tyrosine 205, 244–246, and lysine 249; that span reads KVL. Residue tyrosine 205 coordinates K(+). K(+)-binding residues include alanine 266 and alanine 268. Serine 269 serves as a coordination point for CoA. Valine 366 contacts K(+). Residues histidine 370 and cysteine 400 each act as proton acceptor in the active site.

The protein belongs to the thiolase-like superfamily. Thiolase family.

It carries out the reaction 2 acetyl-CoA = acetoacetyl-CoA + CoA. This is Probable acetyl-CoA acetyltransferase from Dictyostelium discoideum (Social amoeba).